The sequence spans 444 residues: Exopolygalacturonase clone GBGA483 (444 aa).

A signal peptide spans Met-1–Ala-23. PbH1 repeat units lie at residues Cys-220–Arg-246, Ser-247–Asp-268, Thr-270–Ser-290, Val-300–Thr-321, and Ala-330–Gln-351. An N-linked (GlcNAc...) asparagine glycan is attached at Asn-222. The Proton donor role is filled by Asp-261. A disulfide bridge links Cys-263 with Cys-280. His-284 is a catalytic residue. A glycan (N-linked (GlcNAc...) asparagine) is linked at Asn-342. 2 disulfide bridges follow: Cys-391/Cys-397 and Cys-420/Cys-436.

Belongs to the glycosyl hydrolase 28 family.

It is found in the secreted. It localises to the cell wall. It carries out the reaction [(1-&gt;4)-alpha-D-galacturonosyl](n) + H2O = alpha-D-galacturonate + [(1-&gt;4)-alpha-D-galacturonosyl](n-1). Its function is as follows. May function in depolymerizing pectin during pollen development, germination, and tube growth. Acts as an exo-polygalacturonase. The protein is Exopolygalacturonase clone GBGA483 of Arabidopsis thaliana (Mouse-ear cress).